Reading from the N-terminus, the 524-residue chain is Phenylalanine--tRNA ligase alpha subunit (524 aa).

L-phenylalanine is bound by residues T362, Y441, and F467.

The protein belongs to the class-II aminoacyl-tRNA synthetase family. Phe-tRNA synthetase alpha subunit type 2 subfamily. In terms of assembly, tetramer of two alpha and two beta subunits. It depends on Mg(2+) as a cofactor.

The protein resides in the cytoplasm. It carries out the reaction tRNA(Phe) + L-phenylalanine + ATP = L-phenylalanyl-tRNA(Phe) + AMP + diphosphate + H(+). In Methanopyrus kandleri (strain AV19 / DSM 6324 / JCM 9639 / NBRC 100938), this protein is Phenylalanine--tRNA ligase alpha subunit.